Here is a 425-residue protein sequence, read N- to C-terminus: Na(+)/H(+) antiporter NhaA 1 (425 aa).

11 helical membrane passes run Ala-20–Leu-40, Pro-65–Ile-85, Leu-102–Thr-122, Gly-131–Gly-151, Leu-160–Ala-180, Ala-183–Met-203, Phe-218–Leu-238, Phe-272–Leu-292, Ile-303–Val-323, Leu-342–Ala-362, and Leu-373–Ala-393.

Belongs to the NhaA Na(+)/H(+) (TC 2.A.33) antiporter family.

Its subcellular location is the cell inner membrane. It carries out the reaction Na(+)(in) + 2 H(+)(out) = Na(+)(out) + 2 H(+)(in). Functionally, na(+)/H(+) antiporter that extrudes sodium in exchange for external protons. The sequence is that of Na(+)/H(+) antiporter NhaA 1 from Novosphingobium aromaticivorans (strain ATCC 700278 / DSM 12444 / CCUG 56034 / CIP 105152 / NBRC 16084 / F199).